Here is a 468-residue protein sequence, read N- to C-terminus: MIKRERIVKSVLAHVPKDAINQFVSRGSTPTSFSVLFMAAIVGTLAGLVGTYFEIAVHFVSETRTEWLKSEIGSVLPLWLAAILISGALAFIGYYLVNRFAPEASGSGIPEIEGAMDNIRSVRWWRVIPVKFFGGMGALGSGMVLGREGPTVQMGGAVGRMVTDIFRVKDDDTRHSLLASGAAGGLAAAFNAPLAAIMFVVEEMRPQFRYSLISIRAVIISAIMANIVFRAINGQEAVITMPQYQSPELQSLWLFLLLGSLFGVFGVVFNKLITIAQDSFVALHKNDRKRYLITGTILGGVFGLLLLYVPQLTGGGIGLIPDITNGNYSISILVMLFVGRVITTLLCFGSGAPGGIFAPMLALGTLFGYAFGASADMLLPSLTIEPGVFAIAGMGALFAATVRAPITGILLVIEMTNNYYLILPLIITSLGAVIVAQLLGGQPIYSQLLHRTLKNDKLRQQDLPENQA.

Residues 1–32 are Cytoplasmic-facing; the sequence is MIKRERIVKSVLAHVPKDAINQFVSRGSTPTS. A helical membrane pass occupies residues 33–69; sequence FSVLFMAAIVGTLAGLVGTYFEIAVHFVSETRTEWLK. Over 70 to 76 the chain is Periplasmic; sequence SEIGSVL. Residues 77-100 form a helical membrane-spanning segment; sequence PLWLAAILISGALAFIGYYLVNRF. Residues 106–110 carry the Selectivity filter part_1 motif; sequence GSGIP. Serine 107 serves as a coordination point for chloride. An intramembrane region (helical) is located at residues 109–116; sequence IPEIEGAM. At 117-123 the chain is on the cytoplasmic side; the sequence is DNIRSVR. 2 helical membrane passes run 124–141 and 148–166; these read WWRVIPVKFFGGMGALGS and EGPTVQMGGAVGRMVTDIF. Residues 146–150 carry the Selectivity filter part_2 motif; the sequence is GREGP. Topologically, residues 167-176 are cytoplasmic; the sequence is RVKDDDTRHS. 2 consecutive intramembrane regions (helical) follow at residues 177-189 and 193-201; these read LLASGAAGGLAAA and PLAAIMFVV. The Cytoplasmic segment spans residues 202–214; that stretch reads EEMRPQFRYSLIS. A helical membrane pass occupies residues 215–232; the sequence is IRAVIISAIMANIVFRAI. Residues 233–252 lie on the Periplasmic side of the membrane; the sequence is NGQEAVITMPQYQSPELQSL. A helical membrane pass occupies residues 253 to 281; sequence WLFLLLGSLFGVFGVVFNKLITIAQDSFV. The Cytoplasmic segment spans residues 282–287; sequence ALHKND. A helical transmembrane segment spans residues 288–309; it reads RKRYLITGTILGGVFGLLLLYV. Residues 310–329 lie on the Periplasmic side of the membrane; it reads PQLTGGGIGLIPDITNGNYS. Transmembrane regions (helical) follow at residues 330 to 349 and 355 to 376; these read ISILVMLFVGRVITTLLCFG and GIFAPMLALGTLFGYAFGASAD. The Selectivity filter part_3 signature appears at 355 to 359; it reads GIFAP. Residues isoleucine 356 and phenylalanine 357 each coordinate chloride. The Periplasmic segment spans residues 377 to 386; that stretch reads MLLPSLTIEP. The helical intramembrane region spans 387–401; the sequence is GVFAIAGMGALFAAT. The segment at residues 402 to 404 is an intramembrane region (note=Loop between two helices); sequence VRA. The helical intramembrane region spans 405–416; sequence PITGILLVIEMT. The segment at residues 417–421 is an intramembrane region (note=Loop between two helices); that stretch reads NNYYL. The chain crosses the membrane as a helical span at residues 422 to 438; the sequence is ILPLIITSLGAVIVAQL. The Cytoplasmic segment spans residues 439–468; it reads LGGQPIYSQLLHRTLKNDKLRQQDLPENQA. Tyrosine 445 is a binding site for chloride.

Belongs to the chloride channel (TC 2.A.49) family. ClcA subfamily. As to quaternary structure, homodimer.

It localises to the cell inner membrane. It catalyses the reaction 2 chloride(in) + H(+)(out) = 2 chloride(out) + H(+)(in). Its function is as follows. Proton-coupled chloride transporter. Functions as antiport system and exchanges two chloride ions for 1 proton. Probably acts as an electrical shunt for an outwardly-directed proton pump that is linked to amino acid decarboxylation, as part of the extreme acid resistance (XAR) response. The chain is H(+)/Cl(-) exchange transporter ClcA from Vibrio campbellii (strain ATCC BAA-1116).